We begin with the raw amino-acid sequence, 355 residues long: Protein-glutamate methylesterase/protein-glutamine glutaminase (355 aa).

The 119-residue stretch at 3–121 (NVLVVEDSPV…HPDHEATARK (119 aa)) folds into the Response regulatory domain. Asp-54 bears the 4-aspartylphosphate mark. The CheB-type methylesterase domain occupies 154–348 (PLLNRVAPAR…AALTNLVAER (195 aa)). Catalysis depends on residues Ser-170, His-197, and Asp-290.

This sequence belongs to the CheB family. Post-translationally, phosphorylated by CheA. Phosphorylation of the N-terminal regulatory domain activates the methylesterase activity.

The protein resides in the cytoplasm. It carries out the reaction [protein]-L-glutamate 5-O-methyl ester + H2O = L-glutamyl-[protein] + methanol + H(+). The enzyme catalyses L-glutaminyl-[protein] + H2O = L-glutamyl-[protein] + NH4(+). Its function is as follows. Involved in chemotaxis. Part of a chemotaxis signal transduction system that modulates chemotaxis in response to various stimuli. Catalyzes the demethylation of specific methylglutamate residues introduced into the chemoreceptors (methyl-accepting chemotaxis proteins or MCP) by CheR. Also mediates the irreversible deamidation of specific glutamine residues to glutamic acid. The sequence is that of Protein-glutamate methylesterase/protein-glutamine glutaminase from Nitrosospira multiformis (strain ATCC 25196 / NCIMB 11849 / C 71).